Here is a 120-residue protein sequence, read N- to C-terminus: Cell cycle protein GpsB (120 aa).

Residues 32–68 (LDDIIKDYETYAALVKELREENRRLKEELAAKPVEKA) are a coiled coil. Residues 63–88 (KPVEKAPVQPTQPVQSTQATQSTVES) form a disordered region. Low complexity predominate over residues 68-86 (APVQPTQPVQSTQATQSTV).

This sequence belongs to the GpsB family. In terms of assembly, forms polymers through the coiled coil domains. Interacts with PBP1, MreC and EzrA.

Its subcellular location is the cytoplasm. In terms of biological role, divisome component that associates with the complex late in its assembly, after the Z-ring is formed, and is dependent on DivIC and PBP2B for its recruitment to the divisome. Together with EzrA, is a key component of the system that regulates PBP1 localization during cell cycle progression. Its main role could be the removal of PBP1 from the cell pole after pole maturation is completed. Also contributes to the recruitment of PBP1 to the division complex. Not essential for septum formation. The protein is Cell cycle protein GpsB of Streptococcus sanguinis (strain SK36).